Consider the following 311-residue polypeptide: Forkhead box protein R2 (311 aa).

Disordered regions lie at residues 56 to 76 and 90 to 171; these read PPEM…PCEP and LGSQ…QSPE. Residues 115–128 are compositionally biased toward basic and acidic residues; that stretch reads QKDEGSNCSEDKVV. Over residues 129 to 143 the composition is skewed to low complexity; sequence ESLPSSSSEQSPLQK. A compositionally biased stretch (acidic residues) spans 153 to 164; it reads ELTEEEAEEPDD. The segment at residues 192 to 294 is a DNA-binding region (fork-head); that stretch reads RPPLNCSHLI…RVLAFAQRER (103 aa).

In terms of tissue distribution, expressed in breast cancer cell lines and primary cancer.

The protein resides in the nucleus. In Homo sapiens (Human), this protein is Forkhead box protein R2 (FOXR2).